The following is a 247-amino-acid chain: MSEATTTLDGWYCLHDLRSIDWAAWKTLSSDERGQAVSEFLNVVEKWNDVAATKKGSHAMYTVVGQKADIMLMILRPTMEELNEIETELNKTTLAEYMVPAYSYVSVVELSNYLPADEDPYQNPQILARLYPELPKANHICFYPMDKRRQGDDNWYMLPMEERKKMMYSHSKIGRQYAGKVRQVISGSVGFDDFEWGVTLFADDVLQFKKLIYEMRFDEVSARYGEFGTFFVGNILPDEKVEKFLHI.

Fe-coproporphyrin III is bound by residues arginine 129, 143–147 (YPMDK), histidine 170, glutamine 183, and serine 221. Tyrosine 143 is an active-site residue.

It belongs to the ChdC family. Type 1 subfamily. The cofactor is Fe-coproporphyrin III.

The catalysed reaction is Fe-coproporphyrin III + 2 H2O2 + 2 H(+) = heme b + 2 CO2 + 4 H2O. It catalyses the reaction Fe-coproporphyrin III + H2O2 + H(+) = harderoheme III + CO2 + 2 H2O. It carries out the reaction harderoheme III + H2O2 + H(+) = heme b + CO2 + 2 H2O. It functions in the pathway porphyrin-containing compound metabolism; protoheme biosynthesis. Its function is as follows. Involved in coproporphyrin-dependent heme b biosynthesis. Catalyzes the decarboxylation of Fe-coproporphyrin III (coproheme) to heme b (protoheme IX), the last step of the pathway. The reaction occurs in a stepwise manner with a three-propionate intermediate. This is Coproheme decarboxylase from Bacillus cereus (strain ATCC 10987 / NRS 248).